The sequence spans 194 residues: Probable GTP-binding protein EngB (194 aa).

The EngB-type G domain occupies 22-194 (DLPEFALAGR…KFWDWIEDKM (173 aa)). GTP-binding positions include 30-37 (GRSNVGKS), 57-61 (GKTQT), 75-78 (DVPG), 142-145 (TKMD), and 175-177 (FSS). Residues serine 37 and threonine 59 each contribute to the Mg(2+) site.

This sequence belongs to the TRAFAC class TrmE-Era-EngA-EngB-Septin-like GTPase superfamily. EngB GTPase family. The cofactor is Mg(2+).

Functionally, necessary for normal cell division and for the maintenance of normal septation. The chain is Probable GTP-binding protein EngB from Lactobacillus gasseri (strain ATCC 33323 / DSM 20243 / BCRC 14619 / CIP 102991 / JCM 1131 / KCTC 3163 / NCIMB 11718 / NCTC 13722 / AM63).